A 170-amino-acid polypeptide reads, in one-letter code: Adenine phosphoribosyltransferase (170 aa).

This sequence belongs to the purine/pyrimidine phosphoribosyltransferase family. Homodimer.

It localises to the cytoplasm. The catalysed reaction is AMP + diphosphate = 5-phospho-alpha-D-ribose 1-diphosphate + adenine. Its pathway is purine metabolism; AMP biosynthesis via salvage pathway; AMP from adenine: step 1/1. In terms of biological role, catalyzes a salvage reaction resulting in the formation of AMP, that is energically less costly than de novo synthesis. This chain is Adenine phosphoribosyltransferase, found in Bacillus anthracis (strain A0248).